A 179-amino-acid polypeptide reads, in one-letter code: Adenine phosphoribosyltransferase (179 aa).

This sequence belongs to the purine/pyrimidine phosphoribosyltransferase family. Homodimer.

It is found in the cytoplasm. It catalyses the reaction AMP + diphosphate = 5-phospho-alpha-D-ribose 1-diphosphate + adenine. It participates in purine metabolism; AMP biosynthesis via salvage pathway; AMP from adenine: step 1/1. In terms of biological role, catalyzes a salvage reaction resulting in the formation of AMP, that is energically less costly than de novo synthesis. In Helicobacter pylori (strain G27), this protein is Adenine phosphoribosyltransferase.